We begin with the raw amino-acid sequence, 689 residues long: Beta-adrenergic receptor kinase 1 (689 aa).

Residues 1–190 are N-terminal; it reads MADLEAVLAD…ELNIHLTMND (190 aa). The RGS domain occupies 54–175; the sequence is TFEKIFSQKL…IESEKFTRFC (122 aa). A Protein kinase domain is found at 191 to 453; it reads FSVHRIIGRG…AQEVKEDPFF (263 aa). ATP contacts are provided by residues 197–205 and Lys220; that span reads IGRGGFGEV. The active-site Proton acceptor is the Asp317. The region spanning 454 to 521 is the AGC-kinase C-terminal domain; the sequence is KAVDWQMVLL…TISERWQQEV (68 aa). One can recognise a PH domain in the interval 558-652; sequence DCIMHGYMSK…WKKELRDVYR (95 aa). A disordered region spans residues 665 to 689; the sequence is KNKPRSPVVELSKMPLTQRGSANGL. At Ser670 the chain carries Phosphoserine.

The protein belongs to the protein kinase superfamily. AGC Ser/Thr protein kinase family. GPRK subfamily. As to quaternary structure, interacts with the heterodimer formed by GNB1 and GNG2. Interacts with GIT1. Interacts with, and phosphorylates chemokine-stimulated CCR5. Interacts with ARRB1. Interacts with LPAR1 and LPAR2. Interacts with RALA in response to LPAR1 activation. ADRBK1 and RALA mutually inhibit each other's binding to LPAR1. Interacts with ADRB2.

The protein resides in the cytoplasm. It localises to the cell membrane. Its subcellular location is the postsynapse. It is found in the presynapse. The enzyme catalyses [beta-adrenergic receptor] + ATP = [beta-adrenergic receptor]-phosphate + ADP + H(+). With respect to regulation, in contrast to other AGC family kinases, the catalytic activity is solely regulated by the binding of substrates and ligands, not by phosphorylation of the kinase domain. Functionally, specifically phosphorylates the agonist-occupied form of the beta-adrenergic and closely related receptors, probably inducing a desensitization of them. Does not act on HTR1B/5-hydroxytryptamine 1B receptor. Key regulator of LPAR1 signaling. Competes with RALA for binding to LPAR1 thus affecting the signaling properties of the receptor. Desensitizes LPAR1 and LPAR2 in a phosphorylation-independent manner. Inhibits relaxation of airway smooth muscle in response to blue light. The sequence is that of Beta-adrenergic receptor kinase 1 from Didelphis virginiana (North American opossum).